The primary structure comprises 102 residues: ATP-dependent Clp protease adapter protein ClpS (102 aa).

The protein belongs to the ClpS family. As to quaternary structure, binds to the N-terminal domain of the chaperone ClpA.

Its function is as follows. Involved in the modulation of the specificity of the ClpAP-mediated ATP-dependent protein degradation. The chain is ATP-dependent Clp protease adapter protein ClpS from Shewanella loihica (strain ATCC BAA-1088 / PV-4).